Here is a 548-residue protein sequence, read N- to C-terminus: ATP synthase subunit alpha (548 aa).

172-179 (GDRKTGKT) is an ATP binding site. The segment at 510–548 (QFTTSSGESAAPSEPEAEALAADEVGQETVKVNRPAPKK) is disordered. Over residues 514–531 (SSGESAAPSEPEAEALAA) the composition is skewed to low complexity.

The protein belongs to the ATPase alpha/beta chains family. In terms of assembly, F-type ATPases have 2 components, CF(1) - the catalytic core - and CF(0) - the membrane proton channel. CF(1) has five subunits: alpha(3), beta(3), gamma(1), delta(1), epsilon(1). CF(0) has three main subunits: a(1), b(2) and c(9-12). The alpha and beta chains form an alternating ring which encloses part of the gamma chain. CF(1) is attached to CF(0) by a central stalk formed by the gamma and epsilon chains, while a peripheral stalk is formed by the delta and b chains.

It localises to the cell membrane. It carries out the reaction ATP + H2O + 4 H(+)(in) = ADP + phosphate + 5 H(+)(out). Produces ATP from ADP in the presence of a proton gradient across the membrane. The alpha chain is a regulatory subunit. This Saccharopolyspora erythraea (strain ATCC 11635 / DSM 40517 / JCM 4748 / NBRC 13426 / NCIMB 8594 / NRRL 2338) protein is ATP synthase subunit alpha.